An 825-amino-acid chain; its full sequence is Glycerol-3-phosphate acyltransferase 1, mitochondrial (825 aa).

Residues methionine 1–glycine 87 lie on the Cytoplasmic side of the membrane. The segment at asparagine 80–valine 120 is important for mitochondrial localization. Residues leucine 88–arginine 118 lie within the membrane without spanning it. The Cytoplasmic portion of the chain corresponds to aspartate 119–leucine 825. The short motif at histidine 230–aspartate 235 is the HXXXXD motif element. 5 residues coordinate CoA: arginine 278, arginine 279, lysine 288, arginine 293, and arginine 328. Serine 380 carries the post-translational modification Phosphoserine. A disordered region spans residues serine 435–alanine 455. Arginine 461 contributes to the CoA binding site. A phosphoserine mark is found at serine 685 and serine 692. 2 positions are modified to N6-acetyllysine: lysine 777 and lysine 781.

Belongs to the GPAT/DAPAT family. As to expression, highly expressed in adipose tissues and lung. Low expression in liver.

The protein resides in the mitochondrion outer membrane. The enzyme catalyses sn-glycerol 3-phosphate + an acyl-CoA = a 1-acyl-sn-glycero-3-phosphate + CoA. It carries out the reaction (9Z,12Z)-octadecadienoyl-CoA + sn-glycerol 3-phosphate = 1-(9Z,12Z)-octadecadienoyl-sn-glycero-3-phosphate + CoA. It catalyses the reaction sn-glycerol 3-phosphate + (9Z)-octadecenoyl-CoA = 1-(9Z-octadecenoyl)-sn-glycero-3-phosphate + CoA. The catalysed reaction is sn-glycerol 3-phosphate + octadecanoyl-CoA = 1-octadecanoyl-sn-glycero-3-phosphate + CoA. The enzyme catalyses sn-glycerol 3-phosphate + hexadecanoyl-CoA = 1-hexadecanoyl-sn-glycero-3-phosphate + CoA. It carries out the reaction dodecanoyl-CoA + sn-glycerol 3-phosphate = 1-dodecanoyl-sn-glycerol 3-phosphate + CoA. It catalyses the reaction 1-acyl-sn-glycero-3-phospho-(1'-sn-glycerol) + an acyl-CoA = a 1,2-diacyl-sn-glycero-3-phospho-(1'-sn-glycerol) + CoA. It participates in phospholipid metabolism; CDP-diacylglycerol biosynthesis; CDP-diacylglycerol from sn-glycerol 3-phosphate: step 1/3. Mitochondrial membrane protein that catalyzes the essential first step of biosynthesis of glycerolipids such as triglycerides, phosphatidic acids and lysophosphatidic acids. Esterifies acyl-group from acyl-coenzyme A (acyl-CoA) to the sn-1 position of glycerol-3-phosphate, to produce lysophosphatidic acid. Has a narrow hydrophobic binding cleft that selects for a linear acyl chain. Catalytic activity is higher for substrates with a 16-carbon acyl chain. The sequence is that of Glycerol-3-phosphate acyltransferase 1, mitochondrial from Bos taurus (Bovine).